Reading from the N-terminus, the 150-residue chain is Small ribosomal subunit protein uS11y (150 aa).

The residue at position 19 (S19) is a Phosphoserine.

Belongs to the universal ribosomal protein uS11 family.

It is found in the cytoplasm. This chain is Small ribosomal subunit protein uS11y (RPS14B), found in Arabidopsis thaliana (Mouse-ear cress).